The following is a 383-amino-acid chain: Delta(12)-fatty-acid desaturase FAD2 (383 aa).

A run of 2 helical transmembrane segments spans residues 56-76 (VVYD…YFHL) and 84-104 (VAWP…WVIA). A Histidine box-1 motif is present at residues 105–109 (HECGH). A helical transmembrane segment spans residues 117 to 137 (LLDDIVGLVLHSCLLVPYFSW). Residues 141-145 (HRRHH) carry the Histidine box-2 motif. Helical transmembrane passes span 179–199 (LFTL…FNVS), 225–245 (IYIS…LAAA), and 249–269 (AWVI…LVMI). Positions 315-319 (HVAHH) match the Histidine box-3 motif.

This sequence belongs to the fatty acid desaturase type 1 family. Expressed in leaves and seeds.

It localises to the endoplasmic reticulum membrane. It catalyses the reaction (9Z)-octadecenoyl-CoA + 2 Fe(II)-[cytochrome b5] + O2 + 2 H(+) = (9Z,12Z)-octadecadienoyl-CoA + 2 Fe(III)-[cytochrome b5] + 2 H2O. The catalysed reaction is (9Z)-hexadecenoyl-CoA + 2 Fe(II)-[cytochrome b5] + O2 + 2 H(+) = (9Z,12Z)-hexadecadienoyl-CoA + 2 Fe(III)-[cytochrome b5] + 2 H2O. The protein operates within lipid metabolism; polyunsaturated fatty acid biosynthesis. Catalyzes the desaturation of oleic acid (18:1(9Z)) to linoleic acid (18:2(9Z,12Z)). This chain is Delta(12)-fatty-acid desaturase FAD2, found in Vernicia fordii (Tung).